We begin with the raw amino-acid sequence, 390 residues long: Queuine tRNA-ribosyltransferase (390 aa).

Aspartate 92 acts as the Proton acceptor in catalysis. Residues 92–96 (DSGGF), aspartate 146, glutamine 195, and glycine 222 each bind substrate. Residues 253-259 (GVGTPED) form an RNA binding region. Aspartate 272 serves as the catalytic Nucleophile. Residues 277–281 (TRNAR) form an RNA binding; important for wobble base 34 recognition region. Zn(2+)-binding residues include cysteine 310, cysteine 312, cysteine 315, and histidine 354.

The protein belongs to the queuine tRNA-ribosyltransferase family. As to quaternary structure, homodimer. Within each dimer, one monomer is responsible for RNA recognition and catalysis, while the other monomer binds to the replacement base PreQ1. Requires Zn(2+) as cofactor.

The catalysed reaction is 7-aminomethyl-7-carbaguanine + guanosine(34) in tRNA = 7-aminomethyl-7-carbaguanosine(34) in tRNA + guanine. The protein operates within tRNA modification; tRNA-queuosine biosynthesis. Functionally, catalyzes the base-exchange of a guanine (G) residue with the queuine precursor 7-aminomethyl-7-deazaguanine (PreQ1) at position 34 (anticodon wobble position) in tRNAs with GU(N) anticodons (tRNA-Asp, -Asn, -His and -Tyr). Catalysis occurs through a double-displacement mechanism. The nucleophile active site attacks the C1' of nucleotide 34 to detach the guanine base from the RNA, forming a covalent enzyme-RNA intermediate. The proton acceptor active site deprotonates the incoming PreQ1, allowing a nucleophilic attack on the C1' of the ribose to form the product. After dissociation, two additional enzymatic reactions on the tRNA convert PreQ1 to queuine (Q), resulting in the hypermodified nucleoside queuosine (7-(((4,5-cis-dihydroxy-2-cyclopenten-1-yl)amino)methyl)-7-deazaguanosine). The protein is Queuine tRNA-ribosyltransferase of Paracidovorax citrulli (strain AAC00-1) (Acidovorax citrulli).